A 419-amino-acid chain; its full sequence is Innexin-2 (419 aa).

The next 4 membrane-spanning stretches (helical) occupy residues 33-53, 108-128, 184-204, and 270-290; these read AWFT…KQYF, PLVL…WNLF, INYF…MVLL, and LYIC…AGMI.

This sequence belongs to the pannexin family.

Its subcellular location is the cell membrane. It is found in the cell junction. The protein localises to the gap junction. Its function is as follows. Structural component of the gap junctions. In Caenorhabditis elegans, this protein is Innexin-2 (inx-2).